Here is a 257-residue protein sequence, read N- to C-terminus: Cytosolic Fe-S cluster assembly factor NUBP2 homolog (257 aa).

Residue 14–21 (GKGGVGKS) coordinates ATP. [4Fe-4S] cluster contacts are provided by C188 and C191.

This sequence belongs to the Mrp/NBP35 ATP-binding proteins family. NUBP2/CFD1 subfamily. Heterotetramer of 2 NUBP1 and 2 NUBP2 chains. The cofactor is [4Fe-4S] cluster.

It is found in the cytoplasm. In terms of biological role, component of the cytosolic iron-sulfur (Fe/S) protein assembly (CIA) machinery. Required for maturation of extramitochondrial Fe-S proteins. The NUBP1-NUBP2 heterotetramer forms a Fe-S scaffold complex, mediating the de novo assembly of an Fe-S cluster and its transfer to target apoproteins. This is Cytosolic Fe-S cluster assembly factor NUBP2 homolog from Culex quinquefasciatus (Southern house mosquito).